The following is a 316-amino-acid chain: Lipoyl synthase (316 aa).

Basic and acidic residues predominate over residues 1 to 15 (MKARNESMSKGEYKT). Positions 1–33 (MKARNESMSKGEYKTKSLKNRPDPTQPKLKKPS) are disordered. Cys-64, Cys-69, Cys-75, Cys-90, Cys-94, Cys-97, and Ser-304 together coordinate [4Fe-4S] cluster. The region spanning 76–293 (FGHGTATFMI…EQAGMEMGFT (218 aa)) is the Radical SAM core domain.

It belongs to the radical SAM superfamily. Lipoyl synthase family. [4Fe-4S] cluster is required as a cofactor.

It is found in the cytoplasm. The catalysed reaction is [[Fe-S] cluster scaffold protein carrying a second [4Fe-4S](2+) cluster] + N(6)-octanoyl-L-lysyl-[protein] + 2 oxidized [2Fe-2S]-[ferredoxin] + 2 S-adenosyl-L-methionine + 4 H(+) = [[Fe-S] cluster scaffold protein] + N(6)-[(R)-dihydrolipoyl]-L-lysyl-[protein] + 4 Fe(3+) + 2 hydrogen sulfide + 2 5'-deoxyadenosine + 2 L-methionine + 2 reduced [2Fe-2S]-[ferredoxin]. The protein operates within protein modification; protein lipoylation via endogenous pathway; protein N(6)-(lipoyl)lysine from octanoyl-[acyl-carrier-protein]: step 2/2. In terms of biological role, catalyzes the radical-mediated insertion of two sulfur atoms into the C-6 and C-8 positions of the octanoyl moiety bound to the lipoyl domains of lipoate-dependent enzymes, thereby converting the octanoylated domains into lipoylated derivatives. The protein is Lipoyl synthase of Hydrogenovibrio crunogenus (strain DSM 25203 / XCL-2) (Thiomicrospira crunogena).